The chain runs to 101 residues: Small ribosomal subunit protein uS10 (101 aa).

Belongs to the universal ribosomal protein uS10 family. As to quaternary structure, part of the 30S ribosomal subunit.

Involved in the binding of tRNA to the ribosomes. The protein is Small ribosomal subunit protein uS10 of Corynebacterium efficiens (strain DSM 44549 / YS-314 / AJ 12310 / JCM 11189 / NBRC 100395).